The following is a 142-amino-acid chain: Galactose-6-phosphate isomerase subunit LacA (142 aa).

Belongs to the LacAB/RpiB family. As to quaternary structure, heteromultimeric protein consisting of LacA and LacB.

The catalysed reaction is aldehydo-D-galactose 6-phosphate = keto-D-tagatose 6-phosphate. It functions in the pathway carbohydrate metabolism; D-galactose 6-phosphate degradation; D-tagatose 6-phosphate from D-galactose 6-phosphate: step 1/1. This is Galactose-6-phosphate isomerase subunit LacA from Staphylococcus haemolyticus (strain JCSC1435).